Here is a 197-residue protein sequence, read N- to C-terminus: dCTP deaminase (197 aa).

Residues 110 to 115 (RSSLAR), Asp128, 136 to 138 (VLE), Tyr171, and Gln182 each bind dCTP. The Proton donor/acceptor role is filled by Glu138.

Belongs to the dCTP deaminase family. As to quaternary structure, homotrimer.

It carries out the reaction dCTP + H2O + H(+) = dUTP + NH4(+). Its pathway is pyrimidine metabolism; dUMP biosynthesis; dUMP from dCTP (dUTP route): step 1/2. Its function is as follows. Catalyzes the deamination of dCTP to dUTP. The polypeptide is dCTP deaminase (Alteromonas mediterranea (strain DSM 17117 / CIP 110805 / LMG 28347 / Deep ecotype)).